The sequence spans 431 residues: MRLLFSFCFFFFMIIFTATAYDPLDPSGNITIKWDIMSWTADGYVATVTMNNFQIYRHIQNPGWTLGWTWAKKEVIWSMVGAQTTEQGDCSKFKGNVPHCCKKTPTVVDLLPGVPYNQQFSNCCKGGVIGAWGQDPSAAVSQFQVSAGLAGTTNKTVKLPKNFTLLGPGPGYTCGPAKIVPSTVFLTTDKRRKTQALMTWNVTCTYSQFLARKHPSCCVSFSSFYNDTITPCPSCACGCENKKSCVKADSKILTKKGLNTPKKDNTPLLQCTHHMCPVRVHWHVKTNYKDYWRVKIAITNFNYRMNHTLWTLAIQHPNLNNVTQVFSFDYKPVSPYGSINDTGMFYGTKFYNDLLMEAGPSGNVQSEVLLQKDQKTFTFKQGWAFPRKVYFNGDECMLPPPDSYPFLPNSAQGNFASFSLTILLLLFISIW.

The N-terminal stretch at 1–20 is a signal peptide; the sequence is MRLLFSFCFFFFMIIFTATA. N-linked (GlcNAc...) asparagine glycans are attached at residues Asn-29, Asn-154, Asn-162, Asn-201, Asn-226, Asn-306, Asn-321, and Asn-340. Asn-414 carries the GPI-anchor amidated asparagine lipid modification. A propeptide spans 415 to 431 (removed in mature form); the sequence is FASFSLTILLLLFISIW.

It belongs to the COBRA family. In terms of tissue distribution, expressed in roots, stems, leaves, flowers and siliques.

The protein resides in the cell membrane. This chain is COBRA-like protein 4 (COBL4), found in Arabidopsis thaliana (Mouse-ear cress).